The primary structure comprises 392 residues: Chorismate synthase (392 aa).

NADP(+)-binding residues include Arg40 and Arg46. Residues 135–137 (RAS), 256–257 (QA), Gly300, 315–319 (KPIAT), and Arg341 each bind FMN.

Belongs to the chorismate synthase family. In terms of assembly, homotetramer. FMNH2 serves as cofactor.

It catalyses the reaction 5-O-(1-carboxyvinyl)-3-phosphoshikimate = chorismate + phosphate. Its pathway is metabolic intermediate biosynthesis; chorismate biosynthesis; chorismate from D-erythrose 4-phosphate and phosphoenolpyruvate: step 7/7. Functionally, catalyzes the anti-1,4-elimination of the C-3 phosphate and the C-6 proR hydrogen from 5-enolpyruvylshikimate-3-phosphate (EPSP) to yield chorismate, which is the branch point compound that serves as the starting substrate for the three terminal pathways of aromatic amino acid biosynthesis. This reaction introduces a second double bond into the aromatic ring system. This is Chorismate synthase from Nocardioides sp. (strain ATCC BAA-499 / JS614).